The primary structure comprises 219 residues: Thiopurine S-methyltransferase (219 aa).

Positions 10, 45, 66, and 123 each coordinate S-adenosyl-L-methionine.

It belongs to the class I-like SAM-binding methyltransferase superfamily. TPMT family.

It is found in the cytoplasm. The enzyme catalyses S-adenosyl-L-methionine + a thiopurine = S-adenosyl-L-homocysteine + a thiopurine S-methylether.. This chain is Thiopurine S-methyltransferase, found in Marinobacter nauticus (strain ATCC 700491 / DSM 11845 / VT8) (Marinobacter aquaeolei).